The following is a 450-amino-acid chain: Phosphoglucosamine mutase (450 aa).

Serine 101 functions as the Phosphoserine intermediate in the catalytic mechanism. Residues serine 101, aspartate 240, aspartate 242, and aspartate 244 each contribute to the Mg(2+) site. Serine 101 is modified (phosphoserine).

Belongs to the phosphohexose mutase family. Mg(2+) is required as a cofactor. Post-translationally, activated by phosphorylation.

The catalysed reaction is alpha-D-glucosamine 1-phosphate = D-glucosamine 6-phosphate. Catalyzes the conversion of glucosamine-6-phosphate to glucosamine-1-phosphate. This is Phosphoglucosamine mutase from Streptococcus equi subsp. zooepidemicus (strain H70).